A 318-amino-acid polypeptide reads, in one-letter code: MESYGRKRAWKKGPTRGKGGPQNAACEYRGVRQRTWGKWVAEIREPNKRTRLWLGSFATAEEAALAYDEAARRLYGPDAFLNLPHLRAASAAAAHQRLRWLPASAAAAAARGGAAAVPAYGLLNLNAQHNVHVIHQRLQELKNSSSSPTKPPPRTPTRANPPPPPLPTSSPCSTVTNSVGSAALPPPMSCFQALEQAMAATAAMESAPCDDDAAVVGFGADKPQLDLKEFLQQIGVLKADDDGATGKNGAVHGDDGELADAFGFGGSGEFDWDALAADMSDIAGGHGGALGANGGFQMDDLHEVEQFGGCMPIPIWDI.

A compositionally biased stretch (basic residues) spans 1-15 (MESYGRKRAWKKGPT). The disordered stretch occupies residues 1–24 (MESYGRKRAWKKGPTRGKGGPQNA). A DNA-binding region (AP2/ERF) is located at residues 27 to 84 (EYRGVRQRTWGKWVAEIREPNKRTRLWLGSFATAEEAALAYDEAARRLYGPDAFLNLP). The tract at residues 140–178 (ELKNSSSSPTKPPPRTPTRANPPPPPLPTSSPCSTVTNS) is disordered. The span at 149–168 (TKPPPRTPTRANPPPPPLPT) shows a compositional bias: pro residues.

This sequence belongs to the AP2/ERF transcription factor family. ERF subfamily.

The protein resides in the nucleus. Functionally, probable transcriptional activator that binds to the DNA sequence 5'-[AG]CCGAC-3' of the cis-acting dehydration-responsive element (DRE). The protein is Dehydration-responsive element-binding protein 2E (DREB2E) of Oryza sativa subsp. japonica (Rice).